The primary structure comprises 504 residues: Probable alpha-L-arabinofuranosidase C (504 aa).

N-linked (GlcNAc...) asparagine glycans are attached at residues asparagine 152, asparagine 181, and asparagine 269.

It belongs to the glycosyl hydrolase 51 family.

It localises to the secreted. It catalyses the reaction Hydrolysis of terminal non-reducing alpha-L-arabinofuranoside residues in alpha-L-arabinosides.. The protein operates within glycan metabolism; L-arabinan degradation. Functionally, alpha-L-arabinofuranosidase involved in the degradation of arabinoxylan, a major component of plant hemicellulose. Acts only on small linear 1,5-alpha-linked L-arabinofuranosyl oligosaccharides. The protein is Probable alpha-L-arabinofuranosidase C (abfC) of Aspergillus flavus (strain ATCC 200026 / FGSC A1120 / IAM 13836 / NRRL 3357 / JCM 12722 / SRRC 167).